An 857-amino-acid polypeptide reads, in one-letter code: MNIRPSQIKHKQRIASFITHAVVVVMGVLIVSVLFQSYQISSRLMAQEGQRTSVQTSSLIQSLFDFRLAALRIHQDSTAKNASLINALVSRDSSRLDEFFSSVDELELSNAPDLRFISSHDNILWDDGNASFYGIAQQELNKLIRRVAISGNWHLVQTPSEGKSVHILMRRSSLIEAGTGQVVGYLYVGIVLNDNFALLENIRSGSNSENLVLAVDTTPLVSTLKGNEPYSLDYVVHSAKDAMRDSFIVGQTFLEVESVPTYLCVYSIQTNQNVLTLRDNFYFWMAFALISMIGVSIASRWWLQKRIQREIETLMNYTHKLMDLDTKSEFIGSKIYEFDYFGRTLEQSFRRLANKEKQFEDLFNFALSPTMLWNTSGRLIRMNPSAQIQFLREDAQNHFLFEILERQLLPTITNAAQGNNPSDVTTEVDGRVYRWNLSPIMVEGQIISIITQGQDITTIAEAEKQSQAARREAEESARVRAEFLAKMSHELRTPLNGVLGVSQLLKRTPLNDEQREHVAVLCSSGEHLLAVLNDILDFSRLEQGKFRIQKNEFRLKELVCAIDRIYRPLCNEKGLELVVNSNITTAAIVRSDQIRINQILFNLLNNAIKFTHQGSIRVELQLIEGDPLAQLVIQVVDTGIGIREQDLTVIFEPFMQAESTTTREYGGSGLGLTIVHSLVEMLSGQLHVSSEYGIGTRFEIQLPIELVEKPDAPQQLLPAPDPQPLFDKTLRVLLVEDNHTNAFIAQAFCRKYGLDVSWVTDGLQAIEELKIHDYDLVLMDNQLPYLDGVETTRTIKKVLHLPVVVYACTADGLEETRQAFFHAGAEYVLVKPLKEQTLHKALEHFKHHHGQKNAGLN.

Transmembrane regions (helical) follow at residues 14–34 and 283–303; these read IASFITHAVVVVMGVLIVSVL and FWMAFALISMIGVSIASRWWL. Residues 486-706 form the Histidine kinase domain; the sequence is KMSHELRTPL…RFEIQLPIEL (221 aa). Histidine 489 bears the Phosphohistidine; by autocatalysis mark. Residues 731 to 846 enclose the Response regulatory domain; that stretch reads RVLLVEDNHT…TLHKALEHFK (116 aa). Aspartate 780 is modified (4-aspartylphosphate).

As to quaternary structure, binds the complex formed by AI-2 and LuxP.

Its subcellular location is the cell inner membrane. It carries out the reaction ATP + protein L-histidine = ADP + protein N-phospho-L-histidine.. Its function is as follows. At low cell density, in absence of AI-2 (autoinducer 2), LuxQ has a kinase activity and autophosphorylates on a histidine residue. The phosphoryl group is then transferred to an aspartate residue in the response regulator domain. The phosphoryl group is transferred to LuxU, and ultimately to LuxO. At high cell density, in the presence of AI-2, the kinase activity is inactivated, and the response regulator domain has a phosphatase activity. The polypeptide is Autoinducer 2 sensor kinase/phosphatase LuxQ (luxQ) (Vibrio cholerae serotype O1 (strain ATCC 39315 / El Tor Inaba N16961)).